Consider the following 218-residue polypeptide: ATP-dependent dethiobiotin synthetase BioD (218 aa).

10–15 (NAGKTT) contacts ATP. Residue threonine 14 coordinates Mg(2+). Lysine 35 is a catalytic residue. Position 39 (threonine 39) interacts with substrate. Glutamate 116 is a binding site for Mg(2+). Residues 116 to 119 (EGAG) and 176 to 177 (LR) contribute to the ATP site.

It belongs to the dethiobiotin synthetase family. As to quaternary structure, homodimer. It depends on Mg(2+) as a cofactor.

The protein resides in the cytoplasm. It carries out the reaction (7R,8S)-7,8-diammoniononanoate + CO2 + ATP = (4R,5S)-dethiobiotin + ADP + phosphate + 3 H(+). It participates in cofactor biosynthesis; biotin biosynthesis; biotin from 7,8-diaminononanoate: step 1/2. In terms of biological role, catalyzes a mechanistically unusual reaction, the ATP-dependent insertion of CO2 between the N7 and N8 nitrogen atoms of 7,8-diaminopelargonic acid (DAPA, also called 7,8-diammoniononanoate) to form a ureido ring. This is ATP-dependent dethiobiotin synthetase BioD from Helicobacter pylori (strain J99 / ATCC 700824) (Campylobacter pylori J99).